The primary structure comprises 197 residues: Protein SPMIP2 (197 aa).

Residues 161-197 are disordered; sequence SKAALPIGSRPPKLPKLPKKEEKSKFRPLHQHDARCY. Basic and acidic residues predominate over residues 178–197; it reads PKKEEKSKFRPLHQHDARCY.

This Bos taurus (Bovine) protein is Protein SPMIP2 (SPMIP2).